Consider the following 366-residue polypeptide: MDSDDEVVEEAVEGHLDDDGLPHGFCTVTYSSTDRFEGNFVHGEKNGRGKFFFFDGSTLEGYYVDDALQGQGVYTYEDGGVLQGTYVDGELNGPAQEYDSDGRLIFKGQYKDNNRHGVCWIHYPDGGSLVGEVNEDGEMTGEKIAYVYPDQRTALYGKFIDGEMLEGKLATLMATEEGRPHFEVTSGSSVYHFDKSTSSCISSDALLPDPYESERVYVADSLISSAGEGLFSKVAVGPNTVMSFYNGVRITHQEVDSRDWALNGNTLSLDEETVIDVPEPYNHVSKYCASLGHKANHSFTPNCVYDLFVHPRFGPIKCIRTLRAVEAEEELTVAYGYDHSPPGKSGPEAPEWYQVELKAFQATQQK.

3 MORN repeats span residues 36 to 58 (FEGN…DGST), 59 to 81 (LEGY…DGGV), and 106 to 128 (FKGQ…DGGS). The region spanning 214–336 (ERVYVADSLI…AEEELTVAYG (123 aa)) is the SET domain. Residues 226–228 (AGE), Asn-296, His-297, and Glu-356 each bind S-adenosyl-L-methionine.

Belongs to the class V-like SAM-binding methyltransferase superfamily. Histone-lysine methyltransferase family. SET7 subfamily. In terms of assembly, interacts with IPF1/PDX-1.

Its subcellular location is the nucleus. The protein resides in the chromosome. The catalysed reaction is L-lysyl(4)-[histone H3] + S-adenosyl-L-methionine = N(6)-methyl-L-lysyl(4)-[histone H3] + S-adenosyl-L-homocysteine + H(+). It carries out the reaction L-lysyl-[protein] + S-adenosyl-L-methionine = N(6)-methyl-L-lysyl-[protein] + S-adenosyl-L-homocysteine + H(+). Its function is as follows. Histone methyltransferase that specifically monomethylates 'Lys-4' of histone H3. H3 'Lys-4' methylation represents a specific tag for epigenetic transcriptional activation. Plays a central role in the transcriptional activation of genes such as collagenase or insulin. Recruited by IPF1/PDX-1 to the insulin promoter, leading to activate transcription. Also has methyltransferase activity toward non-histone proteins such as CGAS, p53/TP53, TAF10, and possibly TAF7 by recognizing and binding the [KR]-[STA]-K in substrate proteins. Monomethylates 'Lys-189' of TAF10, leading to increase the affinity of TAF10 for RNA polymerase II. Monomethylates 'Lys-372' of p53/TP53, stabilizing p53/TP53 and increasing p53/TP53-mediated transcriptional activation. Monomethylates 'Lys-491' of CGAS, promoting interaction between SGF29 and CGAS. This is Histone-lysine N-methyltransferase SETD7 (Setd7) from Mus musculus (Mouse).